Here is a 121-residue protein sequence, read N- to C-terminus: Met-lysine-1b (121 aa).

An N-terminal signal peptide occupies residues 1–22 (MKSFVFALALIVAFACISESKS). Positions 23–69 (DHTGYEEEENLEDSELTDLVAAALLEELAEASEMDDLSYTEEAGGER) are excised as a propeptide. Met120 carries the post-translational modification Methionine amide.

As to expression, expressed by the venom gland.

It localises to the secreted. Functionally, shows no antimicrobial activity against Gram-positive bacterium B.subtilis B-501 or Gram-negative bacterium E.coli DH5-alpha at concentrations up to 20 ug/ml. Shows no toxicity towards insect (S.carnaria) larvae. In Lachesana tarabaevi (Spider), this protein is Met-lysine-1b.